The chain runs to 303 residues: 2-dehydropantoate 2-reductase (303 aa).

Residues 7 to 12 (GPGSLG), Lys-78, Asn-103, and Ala-129 contribute to the NADP(+) site. The active-site Proton donor is the Lys-185. Residues Lys-185, Asn-189, Asn-193, Asn-203, and 252-255 (NESS) each bind substrate. An NADP(+)-binding site is contributed by Glu-267.

This sequence belongs to the ketopantoate reductase family.

It localises to the cytoplasm. It catalyses the reaction (R)-pantoate + NAD(+) = 2-dehydropantoate + NADH + H(+). It carries out the reaction (R)-pantoate + NADP(+) = 2-dehydropantoate + NADPH + H(+). Its pathway is cofactor biosynthesis; coenzyme A biosynthesis. Catalyzes the NAD(P)H-dependent reduction of ketopantoate into pantoic acid. The sequence is that of 2-dehydropantoate 2-reductase from Halobacterium salinarum (strain ATCC 700922 / JCM 11081 / NRC-1) (Halobacterium halobium).